Here is a 204-residue protein sequence, read N- to C-terminus: Molybdenum cofactor guanylyltransferase (204 aa).

GTP contacts are provided by residues Leu-10 to Gly-12, Lys-23, Asn-51, Asp-69, and Asp-99. Asp-99 provides a ligand contact to Mg(2+).

Belongs to the MobA family. Monomer. It depends on Mg(2+) as a cofactor.

The protein resides in the cytoplasm. It catalyses the reaction Mo-molybdopterin + GTP + H(+) = Mo-molybdopterin guanine dinucleotide + diphosphate. Transfers a GMP moiety from GTP to Mo-molybdopterin (Mo-MPT) cofactor (Moco or molybdenum cofactor) to form Mo-molybdopterin guanine dinucleotide (Mo-MGD) cofactor. This chain is Molybdenum cofactor guanylyltransferase, found in Shewanella piezotolerans (strain WP3 / JCM 13877).